Consider the following 103-residue polypeptide: uncharacterized protein (103 aa).

A helical transmembrane segment spans residues 38-58 (FTTLITIYVAAFYTGVIGAAV).

The protein localises to the membrane. This is an uncharacterized protein from Arabidopsis thaliana (Mouse-ear cress).